A 139-amino-acid chain; its full sequence is MSSGVKVSQECLDKFQELKLGKKIKYIIYSLNDKNTEIVVQNTSTSTSYDDFLAELPPTECRYAIYDFEYEKGDAGKRNKICFFSWSPDDAKIKPKMVFASSKDALRKALVGISTEIQGTDFSEVSYDTVLDKVSRSTF.

Residues 4–135 enclose the ADF-H domain; sequence GVKVSQECLD…SYDTVLDKVS (132 aa).

Belongs to the actin-binding proteins ADF family.

Its subcellular location is the cytoplasm. It localises to the cytoskeleton. The protein localises to the nucleus matrix. Functionally, controls reversibly actin polymerization and depolymerization in a pH-sensitive manner. It has the ability to bind G- and F-actin in a 1:1 ratio of cofilin to actin. Binding to F-actin is regulated by tropomyosin. It is the major component of intranuclear and cytoplasmic actin rods. Required for accumulation of actin at the cell division site via depolymerizing actin at the cell ends. In association with myosin II has a role in the assembly of the contractile ring via severing actin filaments. Involved in the maintenance of the contractile ring once formed. In association with profilin and capping protein, has a role in the mitotic reorganization of the actin cytoskeleton. This chain is Cofilin (COF1), found in Mycosarcoma maydis (Corn smut fungus).